The chain runs to 602 residues: Threonine--tRNA ligase (602 aa).

The segment at 208 to 499 is catalytic; that stretch reads DHRKLGTELK…LTEHCAGEFP (292 aa). Zn(2+) contacts are provided by cysteine 300, histidine 351, and histidine 476.

This sequence belongs to the class-II aminoacyl-tRNA synthetase family. In terms of assembly, homodimer. The cofactor is Zn(2+).

The protein localises to the cytoplasm. The catalysed reaction is tRNA(Thr) + L-threonine + ATP = L-threonyl-tRNA(Thr) + AMP + diphosphate + H(+). Its function is as follows. Catalyzes the attachment of threonine to tRNA(Thr) in a two-step reaction: L-threonine is first activated by ATP to form Thr-AMP and then transferred to the acceptor end of tRNA(Thr). Also edits incorrectly charged L-seryl-tRNA(Thr). The chain is Threonine--tRNA ligase from Campylobacter jejuni subsp. jejuni serotype O:6 (strain 81116 / NCTC 11828).